The chain runs to 239 residues: 2,3,4,5-tetrahydropyridine-2,6-dicarboxylate N-acetyltransferase (239 aa).

Belongs to the transferase hexapeptide repeat family. DapH subfamily.

The catalysed reaction is (S)-2,3,4,5-tetrahydrodipicolinate + acetyl-CoA + H2O = L-2-acetamido-6-oxoheptanedioate + CoA. Its pathway is amino-acid biosynthesis; L-lysine biosynthesis via DAP pathway; LL-2,6-diaminopimelate from (S)-tetrahydrodipicolinate (acetylase route): step 1/3. Its function is as follows. Catalyzes the transfer of an acetyl group from acetyl-CoA to tetrahydrodipicolinate. This is 2,3,4,5-tetrahydropyridine-2,6-dicarboxylate N-acetyltransferase from Staphylococcus haemolyticus (strain JCSC1435).